A 395-amino-acid chain; its full sequence is MLAAGSCSVRTILQPALLLGHSREVVCELVTSFRNFCSKYSVPPSPKYGGKHTVTMIPGDGIGPELMVHVKRIFRSNCVPVEFEEVWATSTSSEEEINNALMAIRRNRITLKGNIATNHHLPAKYKSHNTKFRTALDLYASVVHFKTFPGVETRHKDIDILVVRENTEGEYTNLEHESVRGVVESLKIVTKTKSVRIADYAFRLAQKMGRKKVTVVHKANIMKLGDGLFLQCCKDVAAHYPQITLESMIIDNTAMQLVSKPQQFDVMLMPNLYGNIINSVCTGLVGGSGIVPGANYGDSYAIFETGSKEIGQDLAHRNIANPVAMLLTSCIMLDYLDLQLYAAHIRSAVMASLQNKSICTPDIGGQGTTAGVVEYILDHMKDQNSGCQPRFFLST.

A mitochondrion-targeting transit peptide spans 1 to 25 (MLAAGSCSVRTILQPALLLGHSREV). Thr-117 provides a ligand contact to citrate. Substrate is bound by residues Arg-133, Arg-164, and Asp-251. Asp-251 serves as a coordination point for Mn(2+). An ADP-binding site is contributed by Asn-321.

It belongs to the isocitrate and isopropylmalate dehydrogenases family. As to quaternary structure, heterooligomer of subunits alpha (IDH3A), beta (IDH3B), and gamma (IDH3G) in the apparent ratio of 2:1:1. The heterodimer containing one IDH3A and one IDH3B subunit and the heterodimer containing one IDH3A and one IDH3G subunit assemble into a heterotetramer (which contains two subunits of IDH3A, one of IDH3B and one of IDH3G) and further into the heterooctamer. Mg(2+) serves as cofactor. Mn(2+) is required as a cofactor.

The protein resides in the mitochondrion. Its activity is regulated as follows. The heterotetramer and the heterodimer composed of IDH3A and IDH3G subunits can be allosterically activated by citrate (CIT) or/and ADP, and the two activators can act independently or synergistically. The heterodimer composed of IDH3A and IDH3B subunits cannot be allosterically regulated and the allosteric regulation of the heterotetramer is through the IDH3G subunit and not the IDH3B subunit. The IDH3G subunit contains the allosteric site which consists of a CIT-binding site and an ADP-binding site, and the binding of CIT and ADP causes conformational changes at the allosteric site which are transmitted to the active site in the catalytic subunit (IDH3A) through a cascade of conformational changes at the heterodimer interface, leading to stabilization of the isocitrate-binding at the active site and thus activation of the enzyme. ATP can activate the heterotetramer and the heterodimer composed of IDH3A and IDH3G subunits at low concentrations but inhibits their activities at high concentrations, whereas ATP exhibits only inhibitory effect on the heterodimer composed of IDH3A and IDH3B subunits. Regulatory subunit which plays a role in the allosteric regulation of the enzyme catalyzing the decarboxylation of isocitrate (ICT) into alpha-ketoglutarate. The heterodimer composed of the alpha (IDH3A) and beta (IDH3B) subunits and the heterodimer composed of the alpha (IDH3A) and gamma (IDH3G) subunits, have considerable basal activity but the full activity of the heterotetramer (containing two subunits of IDH3A, one of IDH3B and one of IDH3G) requires the assembly and cooperative function of both heterodimers. The sequence is that of Probable isocitrate dehydrogenase [NAD] gamma 2, mitochondrial from Rattus norvegicus (Rat).